A 157-amino-acid chain; its full sequence is Ribonuclease H (157 aa).

In terms of domain architecture, RNase H type-1 spans Asn2–Ala145. Mg(2+)-binding residues include Asp11, Glu50, Asp74, and Asp137.

The protein belongs to the RNase H family. Monomer. Mg(2+) serves as cofactor.

The protein localises to the cytoplasm. The enzyme catalyses Endonucleolytic cleavage to 5'-phosphomonoester.. Functionally, endonuclease that specifically degrades the RNA of RNA-DNA hybrids. In Cyanothece sp. (strain PCC 7425 / ATCC 29141), this protein is Ribonuclease H.